A 384-amino-acid chain; its full sequence is Spermidine/putrescine import ATP-binding protein PotA (384 aa).

In terms of domain architecture, ABC transporter spans 6-238 (IAFQNVSKVF…PINHFVATFI (233 aa)). 40–47 (GASGSGKS) contributes to the ATP binding site.

It belongs to the ABC transporter superfamily. Spermidine/putrescine importer (TC 3.A.1.11.1) family. As to quaternary structure, the complex is composed of two ATP-binding proteins (PotA), two transmembrane proteins (PotB and PotC) and a solute-binding protein (PotD).

It is found in the cell membrane. The enzyme catalyses ATP + H2O + polyamine-[polyamine-binding protein]Side 1 = ADP + phosphate + polyamineSide 2 + [polyamine-binding protein]Side 1.. In terms of biological role, part of the ABC transporter complex PotABCD involved in spermidine/putrescine import. Responsible for energy coupling to the transport system. This is Spermidine/putrescine import ATP-binding protein PotA from Streptococcus thermophilus (strain ATCC BAA-491 / LMD-9).